The chain runs to 271 residues: Protein PXR1 (271 aa).

The 48-residue stretch at 25-72 (TSRFGHQFLEKFGWKPGMGLGLSPMNSNTSHIKVSIKDDNVGLGAKLK) folds into the G-patch domain. Residues 147 to 239 (SNAKKRKREG…SASNIPDAVN (93 aa)) form a disordered region. Residues 157–168 (DDSEDEDDDDKE) are compositionally biased toward acidic residues. Over residues 175–203 (KKHKKHKKHKKDKKKDKKDKKEHKKHKKE) the composition is skewed to basic residues. Residues 204-221 (EKRLKKEKRAEKTKETKK) show a composition bias toward basic and acidic residues. Serine 230 bears the Phosphoserine mark.

Belongs to the PINX1 family. Interacts with EST2.

It localises to the nucleus. Its subcellular location is the nucleolus. Functionally, involved in rRNA-processing at A0, A1 and A2 sites through its action in U18 and U24 snoRNA 3'-end final trimming. Negative regulator of telomerase through competition for binding to EST2 with TLC1. The chain is Protein PXR1 (PXR1) from Saccharomyces cerevisiae (strain ATCC 204508 / S288c) (Baker's yeast).